Here is a 402-residue protein sequence, read N- to C-terminus: Ubiquitin-like modifier-activating enzyme 5 (402 aa).

The ATP site is built by glycine 81, aspartate 102, lysine 125, asparagine 148, and asparagine 182. Cysteine 224 and cysteine 227 together coordinate Zn(2+). The Glycyl thioester intermediate role is filled by cysteine 248. Zn(2+) contacts are provided by cysteine 301 and cysteine 306. The tract at residues 369 to 402 (EAPEKSSETSEETVTTAPPDDASLEDLMAQMKSM) is disordered.

The protein belongs to the ubiquitin-activating E1 family. UBA5 subfamily.

Its function is as follows. E1-like enzyme which activates UFM1. The sequence is that of Ubiquitin-like modifier-activating enzyme 5 from Drosophila erecta (Fruit fly).